A 1076-amino-acid chain; its full sequence is Carbamoyl phosphate synthase large chain (1076 aa).

The tract at residues 1–403 is carboxyphosphate synthetic domain; it reads MPKRTDIQSI…SLQKALRGLE (403 aa). Residues Arg-129, Arg-169, Gly-175, Gly-176, Glu-208, Leu-210, Glu-215, Gly-241, Val-242, His-243, Gln-285, and Glu-299 each contribute to the ATP site. The 196-residue stretch at 133 to 328 folds into the ATP-grasp 1 domain; that stretch reads DQAMKRIGLE…IAKIAAKLAV (196 aa). Mg(2+) contacts are provided by Gln-285, Glu-299, and Asn-301. Residues Gln-285, Glu-299, and Asn-301 each contribute to the Mn(2+) site. Residues 404-553 are oligomerization domain; sequence TGNDGLDPKV…YSSYEEECEA (150 aa). Residues 554–935 form a carbamoyl phosphate synthetic domain region; it reads EVSDRPKIMV…AFYKAQLGAG (382 aa). Residues 678–869 form the ATP-grasp 2 domain; that stretch reads QHMVDKLGLK…LAQVAARCMA (192 aa). Positions 714, 753, 755, 760, 785, 786, 787, 788, 828, and 840 each coordinate ATP. Gln-828, Glu-840, and Asn-842 together coordinate Mg(2+). Mn(2+) contacts are provided by Gln-828, Glu-840, and Asn-842. The MGS-like domain occupies 936 to 1076; the sequence is EAIPALEGER…LQELHAGVSQ (141 aa). The interval 936–1076 is allosteric domain; the sequence is EAIPALEGER…LQELHAGVSQ (141 aa).

This sequence belongs to the CarB family. Composed of two chains; the small (or glutamine) chain promotes the hydrolysis of glutamine to ammonia, which is used by the large (or ammonia) chain to synthesize carbamoyl phosphate. Tetramer of heterodimers (alpha,beta)4. Mg(2+) serves as cofactor. It depends on Mn(2+) as a cofactor.

It carries out the reaction hydrogencarbonate + L-glutamine + 2 ATP + H2O = carbamoyl phosphate + L-glutamate + 2 ADP + phosphate + 2 H(+). It catalyses the reaction hydrogencarbonate + NH4(+) + 2 ATP = carbamoyl phosphate + 2 ADP + phosphate + 2 H(+). Its pathway is amino-acid biosynthesis; L-arginine biosynthesis; carbamoyl phosphate from bicarbonate: step 1/1. The protein operates within pyrimidine metabolism; UMP biosynthesis via de novo pathway; (S)-dihydroorotate from bicarbonate: step 1/3. Functionally, large subunit of the glutamine-dependent carbamoyl phosphate synthetase (CPSase). CPSase catalyzes the formation of carbamoyl phosphate from the ammonia moiety of glutamine, carbonate, and phosphate donated by ATP, constituting the first step of 2 biosynthetic pathways, one leading to arginine and/or urea and the other to pyrimidine nucleotides. The large subunit (synthetase) binds the substrates ammonia (free or transferred from glutamine from the small subunit), hydrogencarbonate and ATP and carries out an ATP-coupled ligase reaction, activating hydrogencarbonate by forming carboxy phosphate which reacts with ammonia to form carbamoyl phosphate. The sequence is that of Carbamoyl phosphate synthase large chain from Halomonas eurihalina.